We begin with the raw amino-acid sequence, 130 residues long: Small ribosomal subunit protein uS9 (130 aa).

A compositionally biased stretch (basic and acidic residues) spans 99–110; it reads KKAGFLTRDPRM. Positions 99 to 130 are disordered; it reads KKAGFLTRDPRMKERKKYGLKKARRAPQFSKR. Residues 111-130 are compositionally biased toward basic residues; the sequence is KERKKYGLKKARRAPQFSKR.

Belongs to the universal ribosomal protein uS9 family.

The polypeptide is Small ribosomal subunit protein uS9 (Clostridium botulinum (strain Alaska E43 / Type E3)).